The chain runs to 2151 residues: Polycystin-1-like protein 3 (2151 aa).

Positions 1-20 (MLLQRRSWLWLYIRIGVILG) are cleaved as a signal peptide. Residues 25–1073 (RKPSIREQHG…IKLLLHVTNN (1049 aa)) lie on the Extracellular side of the membrane. The region spanning 34 to 142 (GGNSCYQLNR…CIEKHHFICQ (109 aa)) is the C-type lectin domain. Disulfide bonds link cysteine 55–cysteine 141 and cysteine 116–cysteine 133. N-linked (GlcNAc...) asparagine glycosylation is present at asparagine 89. Polar residues predominate over residues 222–245 (SLTGRPQVTSDTLASSSPPQGTSD). The tract at residues 222–609 (SLTGRPQVTS…SSSPPWPVIT (388 aa)) is disordered. A compositionally biased stretch (low complexity) spans 246 to 348 (TPASSSPPQV…ASSSPPQGTS (103 aa)). Polar residues-rich tracts occupy residues 349–363 (DTPA…TLDT) and 371–600 (QGTS…TPAS). N-linked (GlcNAc...) asparagine glycans are attached at residues asparagine 566, asparagine 579, asparagine 592, asparagine 913, and asparagine 951. In terms of domain architecture, GAIN-B spans 899-1061 (TSLNTSTDHF…FIVPRTVDVE (163 aa)). Disulfide bonds link cysteine 1011–cysteine 1039 and cysteine 1026–cysteine 1041. The segment at 1011 to 1061 (CYFWDRYNRTWKSDGCQVGPKSTILKTQCLCDHLTFFSSDFFIVPRTVDVE) is GPS. Residues 1045–1061 (TFFSSDFFIVPRTVDVE) are stachel. The helical transmembrane segment at 1074-1094 (PVGVSLLSSLLGFYILLAMWA) threads the bilayer. Residues 1095–1283 (SRKDREDMQK…NQFTRVQRLS (189 aa)) are Cytoplasmic-facing. A PLAT domain is found at 1119–1236 (SHYLIQVYTG…GNCERDRVFT (118 aa)). Residues 1284-1304 (CCMALLLCDMVINIMFWKMGG) traverse the membrane as a helical segment. The Extracellular segment spans residues 1305 to 1320 (TTAKRGTEQLGPLAVT). The chain crosses the membrane as a helical span at residues 1321–1341 (LSELLVSIQTSIILFPIHLIF). Over 1342–1533 (GRLFQLIHPP…FCLFRWLKCS (192 aa)) the chain is Cytoplasmic. A helical membrane pass occupies residues 1534-1554 (CWLLLGVISLASAFFITLYSL). At 1555-1575 (ELDKDQATSWVISMMLSVLQD) the chain is on the extracellular side. The chain crosses the membrane as a helical span at residues 1576 to 1596 (IFISQPIKVIFLTLLFSLMAN). Topologically, residues 1597 to 1665 (HMPWLNKDKE…KLTGGTLVQI (69 aa)) are cytoplasmic. The chain crosses the membrane as a helical span at residues 1666-1676 (LFLTLLMTTVY). The Extracellular portion of the chain corresponds to 1677-1892 (SAKDSSRFFL…SLTSLQSSER (216 aa)). 2 N-linked (GlcNAc) asparagine glycosylation sites follow: asparagine 1712 and asparagine 1822. The helical transmembrane segment at 1893 to 1921 (GFAWIVSQVVYYLLVCYYAFIQGCRLKRQ) threads the bilayer. At 1922 to 1930 (RLAFFTRKR) the chain is on the cytoplasmic side. Residues 1931–1949 (NLLDTSIVLISFSILGLSM) traverse the membrane as a helical segment. Residues 1950 to 1980 (QSLSLLHKKMQQYHCDRDRFISFYEALRVNS) lie on the Extracellular side of the membrane. The chain crosses the membrane as a helical span at residues 1981–2002 (AVTHLRGFLLLFATVRVWDLLR). Residues 2003–2019 (HHAQLQVINKTLSKAWD) are Cytoplasmic-facing. A helical membrane pass occupies residues 2020-2044 (EVLGFILIIVVLLSSYAMTFNLLFG). The segment at 2043–2081 (FGWSISDYQSFFRSIVTVVGLLMGTSKHKEVIALYPILG) is channel pore-region. Residues 2045–2077 (WSISDYQSFFRSIVTVVGLLMGTSKHKEVIALY) lie on the Extracellular side of the membrane. The helical transmembrane segment at 2078–2097 (PILGSLLVLSSIILMGLVII) threads the bilayer. Residues 2098 to 2151 (NLFVSAILIAFGKERKACEKEATLTDMLLQKLSSLLGIRLHQNPSEEHADNTGY) are Cytoplasmic-facing.

It belongs to the polycystin family. Heterotetramer with PKD2L1, composed of 3 subunit of PKD2L1 and 1 subunit of PKD1L3. Autoproteolytically processed at the GPS region of the GAIN-B domain; this cleavage modulates receptor activity. In terms of tissue distribution, expressed in a subset of taste receptor cells (type III taste cells) distinct from those involved in bitter, sweet and umami taste. Expressed in circumvallate and foliate taste buds, but not in surrounding non-gustatory lingual epithelium cells. Expressed in testis.

It is found in the cell membrane. The enzyme catalyses Ca(2+)(in) = Ca(2+)(out). It catalyses the reaction Na(+)(in) = Na(+)(out). The catalysed reaction is K(+)(in) = K(+)(out). It carries out the reaction Mg(2+)(in) = Mg(2+)(out). With respect to regulation, the non-selective cation channel is gated following an off-response property by acid: gated open after the removal of acid stimulus, but not during acid application. Non-selective cation channel activity is inhibited by capsaicin. Regulation of non-selective cation channel activity by external Ca(2+) is bimodal, first sensitizing and subsequently inactivating the current. The apo (closed) heterotetramer has an asymmetric selectivity filter (SF) guarded by Lys-2069 in absence of Ca(2+). However, Ca(2+)-entrance to the SF vestibule is accompanied by a swing motion of Lys-2069 on PKD1L3. In terms of biological role, pore-forming subunit of a heterotetrameric, non-selective cation channel that is permeable to Ca(2+). Also shows permeability towards NA(1+), K(+) and Mg(2+). Heterotetrameric complex channel is activated by external low pH and Ca(2+), but opens only when the extracellular pH rises again and after the removal of acid stimulus. May act as a sour taste receptor in gustatory cells; however, its contribution to sour taste perception is unclear in vivo and may be indirect. The protein is Polycystin-1-like protein 3 of Mus musculus (Mouse).